Consider the following 685-residue polypeptide: Protein OCTOPUS (685 aa).

Disordered stretches follow at residues 1-34 (MNPA…CNRH), 152-202 (RNLP…DYVE), and 280-314 (KWRQ…RQLR). Over residues 179 to 202 (VNDEGEAESDDEELEEEEEEDYVE) the composition is skewed to acidic residues. The segment covering 280–291 (KWRQNQKMKKRR) has biased composition (basic residues). Residues 292–314 (NGGDHRPGSARLPVEKPIGRQLR) are compositionally biased toward basic and acidic residues. The residue at position 318 (S318) is a Phosphoserine. Positions 419–471 (VEEPAPPPPVVNQTNGVSDPVIIPGGSIQTRDYYTDSSSRRRKSLDRSSSSMR) are disordered. Residues 549–578 (LIYRKSVNKYEEEEEEEEDRYRRLNGGMVE) are a coiled coil. The tract at residues 584-640 (SWPELRNGGGGGGGPRMVRSNSNVSWRSSGGGSARKVNGLDRRNKSSRYSPKNGENG) is disordered. The span at 601–611 (VRSNSNVSWRS) shows a compositional bias: low complexity.

It belongs to the OCTOPUS family. As to quaternary structure, interacts with VCC. Post-translationally, phosphorylation at Ser-318 amplifies the promotion of protophloem differentiation. As to expression, expressed in provascular cells and phloem initials (e.g. protophloem, metaphloem, sieve element precursor cells and sieve element procambium precursor cells).

Its subcellular location is the cell membrane. The protein resides in the cytoplasm. Its function is as follows. Potentiates primary root protophloem differentiation. Required, together with VCC, for embryo provasculature development and cotyledon vascular complexity and connectivity. Regulates roots architecture. Mediates the recruitment of ASK7/BIN2 to the plasma membrane. In Arabidopsis thaliana (Mouse-ear cress), this protein is Protein OCTOPUS.